The primary structure comprises 334 residues: Photosystem II assembly protein Ycf48 (334 aa).

The N-terminal stretch at 1 to 22 is a signal peptide; that stretch reads MAKMLKLWRLVLLAAFSLLLMA.

The protein belongs to the Ycf48 family. As to quaternary structure, part of early PSII assembly complexes which includes D1 (psbA) and PsbI; not found in mature PSII. Binds to the lumenal side of PSII complexes. Interacts with YidC.

The protein resides in the cellular thylakoid lumen. Its function is as follows. A factor required for optimal assembly of photosystem II (PSII), acting in the early stages of PSII assembly. Also plays a role in replacement of photodamaged D1 (psbA). Assists YidC in synthesis of chlorophyll-binding proteins. This is Photosystem II assembly protein Ycf48 from Synechococcus sp. (strain JA-3-3Ab) (Cyanobacteria bacterium Yellowstone A-Prime).